Here is a 296-residue protein sequence, read N- to C-terminus: 4-hydroxy-tetrahydrodipicolinate synthase (296 aa).

Threonine 49 contacts pyruvate. The active-site Proton donor/acceptor is the tyrosine 137. Lysine 166 acts as the Schiff-base intermediate with substrate in catalysis. Residue isoleucine 208 participates in pyruvate binding.

This sequence belongs to the DapA family. As to quaternary structure, homotetramer; dimer of dimers.

Its subcellular location is the cytoplasm. It carries out the reaction L-aspartate 4-semialdehyde + pyruvate = (2S,4S)-4-hydroxy-2,3,4,5-tetrahydrodipicolinate + H2O + H(+). It functions in the pathway amino-acid biosynthesis; L-lysine biosynthesis via DAP pathway; (S)-tetrahydrodipicolinate from L-aspartate: step 3/4. In terms of biological role, catalyzes the condensation of (S)-aspartate-beta-semialdehyde [(S)-ASA] and pyruvate to 4-hydroxy-tetrahydrodipicolinate (HTPA). The chain is 4-hydroxy-tetrahydrodipicolinate synthase from Pelodictyon phaeoclathratiforme (strain DSM 5477 / BU-1).